The primary structure comprises 752 residues: MADLVDHSPHHATKAAKLASASNVILIDNYDSFTWNIYQYLVLEGATVTVYRNDEVTVEDLVAKKPTQLVISPGPGHPDTDAGISNAVIKHFSGKVPIFGVCMGQQCMITSFGGKVDVTGEILHGKTSELKHDSKGVYQGLPTSLEVTRYHSLAGTHSTIPDCLEVTSRVELGDASGKNIIMGVRHKEFAVEGVQFHPESILTQYGRKMFRNFLELTAGTWDNKQGAAVAAPADKKLSILDKIYAHRKNAVDEQKKIPALRPEALQAAYDLNIAPPQLSFPDRLRQSDYPLSLMAEIKRASPSKGIISANVCAPAQAREYAKAGASVISVLTEPEWFKGTIDDLRAVRQSLEGLPNRPAVLRKEFVFEEYQILEARLAGADTVLLIVKMLDIELLTRLYHYSRSLGMEPLVEVNTPEEMKIAVDLGSEVIGVNNRDLTSFEVDLGTTSRLMDQVPESTIVCALSGISGPQDVEAYKKEGVKAILVGEALMRAPDTSAFVAQLLGGSNQNFAGASPSSPLVKICGTRTEEGALAAIQAGADLIGIIMVQGRSRLVPDDVALGISRVVKSTPRPADTLQQPSSATSLEWFDHSTNILRHPSRALLVGVFMNQPLSYVVSQQQKLGLDVVQLHGSEPLEWSSLIPVPVIRKFAPGDIGIARRAYHTLPLLDSGAGGSGELLEESGVKKVLDSDEGLRVILAGGLNPDNVAGTVKKLGQSGQKVVGLDVSSGVETNGAQDLEKIRAFVKSAKSIRQ.

The Glutamine amidotransferase type-1 domain occupies 23 to 223 (NVILIDNYDS…LELTAGTWDN (201 aa)). 74–76 (GPG) is an L-glutamine binding site. The active-site Nucleophile; for GATase activity is C102. L-glutamine-binding positions include Q106 and 152 to 153 (SL). Catalysis depends on for GATase activity residues H197 and E199. The segment at 239–503 (ILDKIYAHRK…DTSAFVAQLL (265 aa)) is indole-3-glycerol phosphate synthase. Positions 519–752 (LVKICGTRTE…FVKSAKSIRQ (234 aa)) are N-(5'-phosphoribosyl)anthranilate isomerase.

The enzyme catalyses N-(5-phospho-beta-D-ribosyl)anthranilate = 1-(2-carboxyphenylamino)-1-deoxy-D-ribulose 5-phosphate. It catalyses the reaction 1-(2-carboxyphenylamino)-1-deoxy-D-ribulose 5-phosphate + H(+) = (1S,2R)-1-C-(indol-3-yl)glycerol 3-phosphate + CO2 + H2O. The catalysed reaction is chorismate + L-glutamine = anthranilate + pyruvate + L-glutamate + H(+). It participates in amino-acid biosynthesis; L-tryptophan biosynthesis; L-tryptophan from chorismate: step 1/5. Its pathway is amino-acid biosynthesis; L-tryptophan biosynthesis; L-tryptophan from chorismate: step 3/5. The protein operates within amino-acid biosynthesis; L-tryptophan biosynthesis; L-tryptophan from chorismate: step 4/5. Trifunctional enzyme bearing the Gln amidotransferase (GATase) domain of anthranilate synthase, indole-glycerolphosphate synthase, and phosphoribosylanthranilate isomerase activities. This chain is Multifunctional tryptophan biosynthesis protein (trpC), found in Penicillium chrysogenum (Penicillium notatum).